The chain runs to 196 residues: MIKQASFITSSANKSNWIDDDVSEICLIGRSNVGKSSFINSLTNNNKLAKISNTPGKTRLLNFFEINKGEYRLVDAPGYGYAKVDDNLKIQFAKMMEEYFINRRNLKGVFLLLDLRHKPSNDDIMMYQFLKHYNIPVVIIGTKLDKLKKSEYVKNEKMIKETISFYQEDDFVKISNLNKTNIIKCYELIDKLLGSK.

In terms of domain architecture, EngB-type G spans 21-195 (DVSEICLIGR…YELIDKLLGS (175 aa)). GTP contacts are provided by residues 29–36 (GRSNVGKS), 56–60 (GKTRL), 75–78 (DAPG), 142–145 (TKLD), and 174–176 (ISN). Mg(2+)-binding residues include Ser-36 and Thr-58.

Belongs to the TRAFAC class TrmE-Era-EngA-EngB-Septin-like GTPase superfamily. EngB GTPase family. The cofactor is Mg(2+).

Functionally, necessary for normal cell division and for the maintenance of normal septation. This Mycoplasma mycoides subsp. mycoides SC (strain CCUG 32753 / NCTC 10114 / PG1) protein is Probable GTP-binding protein EngB.